The sequence spans 450 residues: UDP-N-acetylmuramoylalanine--D-glutamate ligase (450 aa).

119-125 (GSNGKTT) is an ATP binding site.

Belongs to the MurCDEF family.

The protein resides in the cytoplasm. It catalyses the reaction UDP-N-acetyl-alpha-D-muramoyl-L-alanine + D-glutamate + ATP = UDP-N-acetyl-alpha-D-muramoyl-L-alanyl-D-glutamate + ADP + phosphate + H(+). The protein operates within cell wall biogenesis; peptidoglycan biosynthesis. Functionally, cell wall formation. Catalyzes the addition of glutamate to the nucleotide precursor UDP-N-acetylmuramoyl-L-alanine (UMA). In Bacillus cereus (strain ATCC 14579 / DSM 31 / CCUG 7414 / JCM 2152 / NBRC 15305 / NCIMB 9373 / NCTC 2599 / NRRL B-3711), this protein is UDP-N-acetylmuramoylalanine--D-glutamate ligase.